Consider the following 222-residue polypeptide: Large ribosomal subunit protein bL20 (222 aa).

It belongs to the bacterial ribosomal protein bL20 family.

Its function is as follows. Binds directly to 23S ribosomal RNA and is necessary for the in vitro assembly process of the 50S ribosomal subunit. It is not involved in the protein synthesizing functions of that subunit. In Paenarthrobacter aurescens (strain TC1), this protein is Large ribosomal subunit protein bL20 (rplT).